Reading from the N-terminus, the 219-residue chain is Leucyl/phenylalanyl-tRNA--protein transferase (219 aa).

This sequence belongs to the L/F-transferase family.

It is found in the cytoplasm. The enzyme catalyses N-terminal L-lysyl-[protein] + L-leucyl-tRNA(Leu) = N-terminal L-leucyl-L-lysyl-[protein] + tRNA(Leu) + H(+). The catalysed reaction is N-terminal L-arginyl-[protein] + L-leucyl-tRNA(Leu) = N-terminal L-leucyl-L-arginyl-[protein] + tRNA(Leu) + H(+). It carries out the reaction L-phenylalanyl-tRNA(Phe) + an N-terminal L-alpha-aminoacyl-[protein] = an N-terminal L-phenylalanyl-L-alpha-aminoacyl-[protein] + tRNA(Phe). In terms of biological role, functions in the N-end rule pathway of protein degradation where it conjugates Leu, Phe and, less efficiently, Met from aminoacyl-tRNAs to the N-termini of proteins containing an N-terminal arginine or lysine. The protein is Leucyl/phenylalanyl-tRNA--protein transferase of Leptospira borgpetersenii serovar Hardjo-bovis (strain JB197).